Consider the following 977-residue polypeptide: Kinesin-like protein KIN-7L, chloroplastic (977 aa).

The segment covering methionine 1–glycine 12 has biased composition (polar residues). The tract at residues methionine 1–asparagine 66 is disordered. 2 stretches are compositionally biased toward low complexity: residues serine 22–serine 31 and serine 38–proline 54. Residues asparagine 66 to isoleucine 385 form the Kinesin motor domain. Glycine 146–threonine 153 is an ATP binding site. Positions glutamate 386–lysine 471 form a coiled coil. Positions aspartate 549–glycine 589 are disordered. Over residues serine 551 to serine 561 the composition is skewed to low complexity. Positions alanine 563–glycine 575 are enriched in polar residues. Coiled coils occupy residues methionine 626–isoleucine 688 and isoleucine 732–glutamate 942. A compositionally biased stretch (polar residues) spans serine 864–leucine 876. 2 disordered regions span residues serine 864–glutamate 891 and alanine 958–threonine 977. Residues glycine 879–glutamate 891 show a composition bias toward basic and acidic residues. A compositionally biased stretch (polar residues) spans alanine 958–valine 967. Positions serine 968–threonine 977 are enriched in basic and acidic residues.

This sequence belongs to the TRAFAC class myosin-kinesin ATPase superfamily. Kinesin family. KIN-7 subfamily.

The protein resides in the plastid. It is found in the chloroplast. The protein is Kinesin-like protein KIN-7L, chloroplastic of Arabidopsis thaliana (Mouse-ear cress).